The primary structure comprises 349 residues: Small ribosomal subunit protein eS6 (349 aa).

The segment at 224-349 is disordered; sequence RRRSRLSSMR…AKKEKKQKKK (126 aa). 2 stretches are compositionally biased toward basic and acidic residues: residues 231-251 and 260-334; these read SMRD…EKAA and KKEA…EAAK.

Belongs to the eukaryotic ribosomal protein eS6 family. In terms of assembly, component of the small ribosomal subunit. Part of the small subunit (SSU) processome, composed of more than 70 proteins and the RNA chaperone small nucleolar RNA (snoRNA) U3. In terms of processing, ribosomal protein S6 is the major substrate of protein kinases in eukaryote ribosomes.

The protein localises to the cytoplasm. It localises to the nucleus. It is found in the nucleolus. Its function is as follows. Component of the 40S small ribosomal subunit. Plays an important role in controlling cell growth and proliferation through the selective translation of particular classes of mRNA. Part of the small subunit (SSU) processome, first precursor of the small eukaryotic ribosomal subunit. During the assembly of the SSU processome in the nucleolus, many ribosome biogenesis factors, an RNA chaperone and ribosomal proteins associate with the nascent pre-rRNA and work in concert to generate RNA folding, modifications, rearrangements and cleavage as well as targeted degradation of pre-ribosomal RNA by the RNA exosome. This Aedes albopictus (Asian tiger mosquito) protein is Small ribosomal subunit protein eS6 (RpS6).